The primary structure comprises 192 residues: Ion-translocating oxidoreductase complex subunit B (192 aa).

Positions 1–26 are hydrophobic; that stretch reads MNAIWIAVAAVSLLGLAFGAILGYAS. The 4Fe-4S domain maps to 32–91; that stretch reads EDDPVVEKIDEILPQSQCGQCGYPGCRPYAETISCNGEKINRCAPGGEAVMLKIAELLNV. Cysteine 49, cysteine 52, cysteine 57, cysteine 74, cysteine 117, cysteine 120, cysteine 123, cysteine 127, cysteine 147, cysteine 150, cysteine 153, and cysteine 157 together coordinate [4Fe-4S] cluster. 4Fe-4S ferredoxin-type domains lie at 108-137 and 138-167; these read MVAV…GATR and AMHT…LQPV.

The protein belongs to the 4Fe4S bacterial-type ferredoxin family. RnfB subfamily. In terms of assembly, the complex is composed of six subunits: RsxA, RsxB, RsxC, RsxD, RsxE and RsxG. It depends on [4Fe-4S] cluster as a cofactor.

Its subcellular location is the cell inner membrane. In terms of biological role, part of a membrane-bound complex that couples electron transfer with translocation of ions across the membrane. Required to maintain the reduced state of SoxR. The polypeptide is Ion-translocating oxidoreductase complex subunit B (Escherichia coli O6:K15:H31 (strain 536 / UPEC)).